Consider the following 447-residue polypeptide: 3-phosphoshikimate 1-carboxyvinyltransferase (447 aa).

3 residues coordinate 3-phosphoshikimate: K25, S26, and R30. K25 contributes to the phosphoenolpyruvate binding site. G96 and R124 together coordinate phosphoenolpyruvate. 6 residues coordinate 3-phosphoshikimate: S171, S172, Q173, S203, D325, and K352. Q173 lines the phosphoenolpyruvate pocket. D325 (proton acceptor) is an active-site residue. Phosphoenolpyruvate contacts are provided by R356, R400, and K425.

The protein belongs to the EPSP synthase family. As to quaternary structure, monomer.

Its subcellular location is the cytoplasm. The enzyme catalyses 3-phosphoshikimate + phosphoenolpyruvate = 5-O-(1-carboxyvinyl)-3-phosphoshikimate + phosphate. The protein operates within metabolic intermediate biosynthesis; chorismate biosynthesis; chorismate from D-erythrose 4-phosphate and phosphoenolpyruvate: step 6/7. In terms of biological role, catalyzes the transfer of the enolpyruvyl moiety of phosphoenolpyruvate (PEP) to the 5-hydroxyl of shikimate-3-phosphate (S3P) to produce enolpyruvyl shikimate-3-phosphate and inorganic phosphate. This is 3-phosphoshikimate 1-carboxyvinyltransferase from Bordetella petrii (strain ATCC BAA-461 / DSM 12804 / CCUG 43448).